A 512-amino-acid chain; its full sequence is Endoglucanase 14 (512 aa).

The first 22 residues, 1 to 22, serve as a signal peptide directing secretion; it reads MLAAAIELVVIATSCMVRDAHG. N-linked (GlcNAc...) asparagine glycosylation is present at N76. D103 acts as the Nucleophile in catalysis. 2 N-linked (GlcNAc...) asparagine glycosylation sites follow: N192 and N215. Active-site residues include H433, D484, and E493.

The protein belongs to the glycosyl hydrolase 9 (cellulase E) family.

It is found in the secreted. The catalysed reaction is Endohydrolysis of (1-&gt;4)-beta-D-glucosidic linkages in cellulose, lichenin and cereal beta-D-glucans.. In Oryza sativa subsp. japonica (Rice), this protein is Endoglucanase 14.